We begin with the raw amino-acid sequence, 1377 residues long: Clustered mitochondria protein homolog (1377 aa).

Positions 1–61 (MLKSIQRNGK…GETKKKSDSE (61 aa)) are disordered. Residues 353 to 595 (RAEDTFSSKL…RTFPPDVNFL (243 aa)) enclose the Clu domain. The stretch at 519–552 (VYGSIDFGKTVLSHEKYLELLNNAGKHLKIYPHS) is one TPR 1 repeat. Disordered stretches follow at residues 651–700 (NKRQ…VPKV) and 886–917 (DVLT…KSSF). Basic and acidic residues predominate over residues 655 to 690 (QKQDTPKEETKAIEPAAKEDSANNNKEEPAAKKGEP). Positions 886-896 (DVLTKSGSSGK) are enriched in polar residues. TPR repeat units follow at residues 1022 to 1055 (AYNF…LNNV), 1148 to 1181 (ALLD…NIKY), and 1183 to 1216 (GEKS…EKET). Residues 1310 to 1377 (KEGGAAGESS…SKANPVASSS (68 aa)) are disordered. A compositionally biased stretch (low complexity) spans 1364–1377 (ASSSSKANPVASSS).

Belongs to the CLU family.

It is found in the cytoplasm. MRNA-binding protein involved in proper cytoplasmic distribution of mitochondria. In Culex quinquefasciatus (Southern house mosquito), this protein is Clustered mitochondria protein homolog.